A 122-amino-acid polypeptide reads, in one-letter code: Large ribosomal subunit protein uL14 (122 aa).

It belongs to the universal ribosomal protein uL14 family. As to quaternary structure, part of the 50S ribosomal subunit. Forms a cluster with proteins L3 and L19. In the 70S ribosome, L14 and L19 interact and together make contacts with the 16S rRNA in bridges B5 and B8.

Binds to 23S rRNA. Forms part of two intersubunit bridges in the 70S ribosome. This chain is Large ribosomal subunit protein uL14, found in Carsonella ruddii (strain PV).